The chain runs to 198 residues: Cell division protein SepF (198 aa).

The disordered stretch occupies residues 170–198 (EVPQPPARPARPASTNPPAWGNETNRMAQ). A compositionally biased stretch (low complexity) spans 179–188 (ARPASTNPPA).

This sequence belongs to the SepF family. In terms of assembly, homodimer. Interacts with FtsZ.

It is found in the cytoplasm. Cell division protein that is part of the divisome complex and is recruited early to the Z-ring. Probably stimulates Z-ring formation, perhaps through the cross-linking of FtsZ protofilaments. Its function overlaps with FtsA. This is Cell division protein SepF from Nostoc sp. (strain PCC 7120 / SAG 25.82 / UTEX 2576).